The primary structure comprises 466 residues: Neuronal acetylcholine receptor subunit non-alpha-3 (466 aa).

The N-terminal stretch at 1-28 (MKLQISGLLLVTAVAYATIEAPEEFVSL) is a signal peptide. The Extracellular segment spans residues 29–235 (AEMEDTLLRN…VTYSFILKRL (207 aa)). N-linked (GlcNAc...) asparagine glycans are attached at residues asparagine 54, asparagine 141, asparagine 169, and asparagine 208. Cysteine 156 and cysteine 170 form a disulfide bridge. A run of 3 helical transmembrane segments spans residues 236–260 (PLFY…VFYL), 268–285 (LLLS…LLVI), and 302–323 (YLLF…VINV). Topologically, residues 324-438 (HHRSSATYHP…WKFVAQVLDR (115 aa)) are cytoplasmic. Residues 439–456 (IFLWVFLTASVLGTILIF) traverse the membrane as a helical segment.

This sequence belongs to the ligand-gated ion channel (TC 1.A.9) family. Acetylcholine receptor (TC 1.A.9.1) subfamily. Neuronal AChR seems to be composed of two different type of subunits: alpha and non-alpha (beta). Retina, tectum and brain.

It is found in the postsynaptic cell membrane. The protein localises to the cell membrane. In terms of biological role, after binding acetylcholine, the AChR responds by an extensive change in conformation that affects all subunits and leads to opening of an ion-conducting channel across the plasma membrane. The chain is Neuronal acetylcholine receptor subunit non-alpha-3 from Carassius auratus (Goldfish).